Reading from the N-terminus, the 240-residue chain is Regulatory protein SdiA (240 aa).

Positions 173–238 (VMTPEMNFSK…QVACYAAATG (66 aa)) constitute an HTH luxR-type domain. Residues 197-216 (SAEIAMILSISENTVNFHQK) constitute a DNA-binding region (H-T-H motif).

In terms of biological role, activates cell division by specifically increasing transcription from one of the two promoters that lie immediately upstream of the ftsQAZ gene cluster. Activates ydiV expression in response to extracellular autoinducer AI-1 (Vibrio fischeri autoinducer oxoC6). The sequence is that of Regulatory protein SdiA (sdiA) from Escherichia coli (strain K12).